Reading from the N-terminus, the 225-residue chain is Large ribosomal subunit protein bL25 (225 aa).

Residues 188 to 225 are disordered; that stretch reads EEIEEAEAEAQATDADTATDDSEQTSEEQAEENKEDKE. Residues 204–217 are compositionally biased toward acidic residues; it reads TATDDSEQTSEEQA.

It belongs to the bacterial ribosomal protein bL25 family. CTC subfamily. Part of the 50S ribosomal subunit; part of the 5S rRNA/L5/L18/L25 subcomplex. Contacts the 5S rRNA. Binds to the 5S rRNA independently of L5 and L18.

Functionally, this is one of the proteins that binds to the 5S RNA in the ribosome where it forms part of the central protuberance. This Exiguobacterium sibiricum (strain DSM 17290 / CCUG 55495 / CIP 109462 / JCM 13490 / 255-15) protein is Large ribosomal subunit protein bL25.